A 33-amino-acid polypeptide reads, in one-letter code: Brevinin-2PTd (33 aa).

Cysteine 27 and cysteine 33 are oxidised to a cystine.

Expressed by the skin glands.

It localises to the secreted. Its function is as follows. Has antibacterial activity against the Gram-positive bacterium S.aureus ATCC 25923 and the Gram-negative bacterium E.coli ATCC 25726. This is Brevinin-2PTd from Pulchrana picturata (Malaysian fire frog).